The sequence spans 305 residues: Protoheme IX farnesyltransferase (305 aa).

The next 9 membrane-spanning stretches (helical) occupy residues 31 to 51, 52 to 72, 96 to 118, 123 to 145, 151 to 171, 179 to 199, 225 to 245, 247 to 267, and 281 to 301; these read VMSL…YSVH, PFIA…AGAI, VIES…FFMA, LLAS…IWLK, NIVI…AAVS, IILF…LALF, ILIY…IGMN, FIYL…AGSL, and FAYS…TNTI.

Belongs to the UbiA prenyltransferase family. Protoheme IX farnesyltransferase subfamily.

Its subcellular location is the cell inner membrane. The enzyme catalyses heme b + (2E,6E)-farnesyl diphosphate + H2O = Fe(II)-heme o + diphosphate. It participates in porphyrin-containing compound metabolism; heme O biosynthesis; heme O from protoheme: step 1/1. Converts heme B (protoheme IX) to heme O by substitution of the vinyl group on carbon 2 of heme B porphyrin ring with a hydroxyethyl farnesyl side group. This Rickettsia rickettsii (strain Iowa) protein is Protoheme IX farnesyltransferase.